We begin with the raw amino-acid sequence, 215 residues long: High mobility group protein B1 (215 aa).

The segment at residues 9 to 79 is a DNA-binding region (HMG box 1); sequence PRGKMSSYAF…RYEKEMKNYV (71 aa). Cys-23 carries the post-translational modification Cysteine sulfonic acid (-SO3H); alternate. Cys-23 and Cys-45 are joined by a disulfide. The interval 27 to 43 is NLS 1; the sequence is HKKKHPDASVNFSEFSK. The Nuclear localization signal (NLS) 1 motif lies at 27-43; the sequence is HKKKHPDASVNFSEFSK. Residue Cys-45 is modified to Cysteine sulfonic acid (-SO3H); alternate. The disordered stretch occupies residues 75 to 95; the sequence is MKNYVPPKGETKKKFKDPNAP. Residues 83–94 are compositionally biased toward basic and acidic residues; sequence GETKKKFKDPNA. The HMG box 2 DNA-binding region spans 95-163; sequence PKRPPSAFFL…KYEKDIAAYR (69 aa). Cys-106 carries the cysteine sulfonic acid (-SO3H) modification. Basic and acidic residues predominate over residues 166-179; sequence GKVDAGKKVVAKAE. The disordered stretch occupies residues 166-215; the sequence is GKVDAGKKVVAKAEKSKKKKEEEEDEDEDEEDEEDEEEEEEEEEDDDDDE. Positions 178-184 are NLS 2; it reads AEKSKKK. A Nuclear localization signal (NLS) 2 motif is present at residues 178–184; sequence AEKSKKK. Residues 187-215 are compositionally biased toward acidic residues; it reads EEEDEDEDEEDEEDEEEEEEEEEDDDDDE. The tract at residues 196–210 is involved in intramolecular interaction with K-3; the sequence is EDEEDEEEEEEEEED. An involved in interaction with histone H3 region spans residues 211–215; sequence DDDDE.

Belongs to the HMGB family. In terms of processing, reduction/oxidation of cysteine residues Cys-23, Cys-45 and Cys-106 and a possible intramolecular disulfide bond involving Cys-23 and Cys-45 give rise to different redox forms with specific functional activities: 1- fully reduced HMGB1 (HMGB1C23hC45hC106h), 2- disulfide HMGB1 (HMGB1C23-C45C106h) and 3- sulfonyl HMGB1 (HMGB1C23soC45soC106so).

It is found in the nucleus. The protein localises to the chromosome. It localises to the cytoplasm. The protein resides in the secreted. Functionally, multifunctional redox sensitive protein with various roles in different cellular compartments. Nuclear functions are attributed to fully reduced HGMB1. Associates with chromatin and binds DNA with a preference to non-canonical DNA structures such as single-stranded DNA, DNA-containing cruciforms or bent structures, supercoiled DNA and ZDNA. Can bent DNA and enhance DNA flexibility by looping thus providing a mechanism to promote activities on various gene promoters. Can restructure the canonical nucleosome. Proposed to be an universal biosensor for nucleic acids. May promote inflammatory response to sterile and infectious signals and may be involved in the coordination and integration of innate and adaptive immune responses. In the cytoplasm may function as sensor and/or chaperone for immunogenic nucleic acids, and mediate autophagy. May act as danger associated molecular pattern (DAMP) molecule that amplifies immune responses during tissue injury. In Gallus gallus (Chicken), this protein is High mobility group protein B1 (HMGB1).